A 264-amino-acid chain; its full sequence is MNQNLIEVKNLTFKRGDRVIYDNLNLQVKKGKITAIMGPSGIGKTTLLKLIGGQLMPEQGEILFDGQDICRLSNRELYEVRKRMGMLFQSGALFTDISTFDNVAFPIREHTHLPENLIRQIVLMKLEAVGLRGAAALMPSELSGGMARRAALARAIALDPDLIMFDEPFTGQDPISMGVILSLIKRLNEALNLTSIVVSHDVEEVLSIADYAYIIADQKVIAEGTSEQLLQSQDLRVVQFLKGESDGPVRFKYPAQDYVKELFE.

One can recognise an ABC transporter domain in the interval 6–242 (IEVKNLTFKR…QDLRVVQFLK (237 aa)). 38-45 (GPSGIGKT) lines the ATP pocket.

The protein belongs to the ABC transporter superfamily. MlaF family. In terms of assembly, the complex is composed of two ATP-binding proteins (MlaF), two transmembrane proteins (MlaE), two cytoplasmic solute-binding proteins (MlaB) and six periplasmic solute-binding proteins (MlaD).

It localises to the cell inner membrane. Part of the ABC transporter complex MlaFEDB, which is involved in a phospholipid transport pathway that maintains lipid asymmetry in the outer membrane by retrograde trafficking of phospholipids from the outer membrane to the inner membrane. Responsible for energy coupling to the transport system. The protein is Intermembrane phospholipid transport system ATP-binding protein MlaF of Haemophilus influenzae (strain ATCC 51907 / DSM 11121 / KW20 / Rd).